The primary structure comprises 416 residues: Multifunctional CCA protein (416 aa).

ATP-binding residues include G8 and R11. CTP-binding residues include G8 and R11. Positions 21 and 23 each coordinate Mg(2+). ATP contacts are provided by R91, R138, and R141. 3 residues coordinate CTP: R91, R138, and R141. One can recognise an HD domain in the interval 229–331 (TGLHQELVSD…YELLQRCDAF (103 aa)).

This sequence belongs to the tRNA nucleotidyltransferase/poly(A) polymerase family. Bacterial CCA-adding enzyme type 1 subfamily. In terms of assembly, monomer. Can also form homodimers and oligomers. It depends on Mg(2+) as a cofactor. The cofactor is Ni(2+).

The enzyme catalyses a tRNA precursor + 2 CTP + ATP = a tRNA with a 3' CCA end + 3 diphosphate. It catalyses the reaction a tRNA with a 3' CCA end + 2 CTP + ATP = a tRNA with a 3' CCACCA end + 3 diphosphate. Its function is as follows. Catalyzes the addition and repair of the essential 3'-terminal CCA sequence in tRNAs without using a nucleic acid template. Adds these three nucleotides in the order of C, C, and A to the tRNA nucleotide-73, using CTP and ATP as substrates and producing inorganic pyrophosphate. tRNA 3'-terminal CCA addition is required both for tRNA processing and repair. Also involved in tRNA surveillance by mediating tandem CCA addition to generate a CCACCA at the 3' terminus of unstable tRNAs. While stable tRNAs receive only 3'-terminal CCA, unstable tRNAs are marked with CCACCA and rapidly degraded. The chain is Multifunctional CCA protein from Xylella fastidiosa (strain 9a5c).